We begin with the raw amino-acid sequence, 436 residues long: MEIVVIGAGLAGVEAANVISKFGIKVKLFEMKPKKFSPAHKIDNFAELVCSNSLKSKLLTNASGLLKEEMKVFGSLVMEAAEATSVEAGQALAVDRYKFSEYITQRIKHNGLISIIHEEVTEVPRDKVVVVSTGPLTTESLLSDISKLCNSKNLYFFDAAAPIVLKDSIDFSKAFFASRYNKGSNDYINCPMTKEEYERFYWELVNAEVIEVKDFEKDLLFEGCMPIEEMARRGIDTMRYGPLKPVGIIDPRTGKMPYAVVQLRKDTQDGKLYNMVGFQTRLKWSEQKRVFRLIPGLENAEFVRYGVMHKNSYINSPEVLTKYLFLKKYPNIFFAGQITGVEGYLESASTGIIAGINAARQILGKEPISLPPNTCIGALIEYITTPKKDFQPMNANYGIISIDDEISKIKDKEKRKLLIAQKSLNICRELANKIFE.

7–12 (GAGLAG) provides a ligand contact to FAD.

The protein belongs to the MnmG family. TrmFO subfamily. The cofactor is FAD.

It is found in the cytoplasm. The enzyme catalyses uridine(54) in tRNA + (6R)-5,10-methylene-5,6,7,8-tetrahydrofolate + NADH + H(+) = 5-methyluridine(54) in tRNA + (6S)-5,6,7,8-tetrahydrofolate + NAD(+). It catalyses the reaction uridine(54) in tRNA + (6R)-5,10-methylene-5,6,7,8-tetrahydrofolate + NADPH + H(+) = 5-methyluridine(54) in tRNA + (6S)-5,6,7,8-tetrahydrofolate + NADP(+). In terms of biological role, catalyzes the folate-dependent formation of 5-methyl-uridine at position 54 (M-5-U54) in all tRNAs. The polypeptide is Methylenetetrahydrofolate--tRNA-(uracil-5-)-methyltransferase TrmFO (Caldicellulosiruptor bescii (strain ATCC BAA-1888 / DSM 6725 / KCTC 15123 / Z-1320) (Anaerocellum thermophilum)).